Consider the following 158-residue polypeptide: 2-C-methyl-D-erythritol 2,4-cyclodiphosphate synthase (158 aa).

Residues D8 and H10 each contribute to the a divalent metal cation site. 4-CDP-2-C-methyl-D-erythritol 2-phosphate is bound by residues 8–10 and 34–35; these read DVH and HS. An a divalent metal cation-binding site is contributed by H42. 4-CDP-2-C-methyl-D-erythritol 2-phosphate contacts are provided by residues 56–58, 61–65, 100–106, 132–135, and F139; these read DIG, FPDTD, AQKPKML, and TTEE.

Belongs to the IspF family. In terms of assembly, homotrimer. The cofactor is a divalent metal cation.

The catalysed reaction is 4-CDP-2-C-methyl-D-erythritol 2-phosphate = 2-C-methyl-D-erythritol 2,4-cyclic diphosphate + CMP. Its pathway is isoprenoid biosynthesis; isopentenyl diphosphate biosynthesis via DXP pathway; isopentenyl diphosphate from 1-deoxy-D-xylulose 5-phosphate: step 4/6. In terms of biological role, involved in the biosynthesis of isopentenyl diphosphate (IPP) and dimethylallyl diphosphate (DMAPP), two major building blocks of isoprenoid compounds. Catalyzes the conversion of 4-diphosphocytidyl-2-C-methyl-D-erythritol 2-phosphate (CDP-ME2P) to 2-C-methyl-D-erythritol 2,4-cyclodiphosphate (ME-CPP) with a corresponding release of cytidine 5-monophosphate (CMP). The sequence is that of 2-C-methyl-D-erythritol 2,4-cyclodiphosphate synthase from Clostridium beijerinckii (strain ATCC 51743 / NCIMB 8052) (Clostridium acetobutylicum).